An 882-amino-acid polypeptide reads, in one-letter code: Valine--tRNA ligase (882 aa).

The 'HIGH' region signature appears at 42–52 (PNVTGKLHLGH). Residues 522–526 (KMSKS) carry the 'KMSKS' region motif. Position 525 (Lys525) interacts with ATP. Residues 849 to 873 (KIEIEKKKYESYCKQYKKLLESKNN) are a coiled coil.

The protein belongs to the class-I aminoacyl-tRNA synthetase family. ValS type 1 subfamily. In terms of assembly, monomer.

It localises to the cytoplasm. The enzyme catalyses tRNA(Val) + L-valine + ATP = L-valyl-tRNA(Val) + AMP + diphosphate. Its function is as follows. Catalyzes the attachment of valine to tRNA(Val). As ValRS can inadvertently accommodate and process structurally similar amino acids such as threonine, to avoid such errors, it has a 'posttransfer' editing activity that hydrolyzes mischarged Thr-tRNA(Val) in a tRNA-dependent manner. This Onion yellows phytoplasma (strain OY-M) protein is Valine--tRNA ligase.